Here is a 213-residue protein sequence, read N- to C-terminus: Putative nascent polypeptide-associated complex subunit alpha-like protein (213 aa).

The disordered stretch occupies residues 1–46 (MPGEATETVPAIEQQLLQPQAETGSGTESDSDESVPELEEQDSTQV). A compositionally biased stretch (polar residues) spans 15-28 (QLLQPQAETGSGTE). A compositionally biased stretch (acidic residues) spans 29 to 42 (SDSDESVPELEEQD). Ser43 and Ser131 each carry phosphoserine. The NAC-A/B domain maps to 69–134 (RRSEKKARKA…AKIEDLSQEA (66 aa)). At Lys141 the chain carries N6-acetyllysine; alternate. A Glycyl lysine isopeptide (Lys-Gly) (interchain with G-Cter in SUMO2); alternate cross-link involves residue Lys141. At Thr160 the chain carries Phosphothreonine. Ser165, Ser185, and Ser201 each carry phosphoserine. The UBA domain maps to 175–211 (VEIKDIELVLSQANVWGAKAVRALKNSNDIVNAIMEL). Residue Thr212 is modified to Phosphothreonine.

It belongs to the NAC-alpha family.

The chain is Putative nascent polypeptide-associated complex subunit alpha-like protein from Homo sapiens (Human).